A 586-amino-acid polypeptide reads, in one-letter code: Transmembrane protease serine 13 (586 aa).

Disordered stretches follow at residues 1–115 (MERD…VTTS) and 131–157 (PIRS…LPKF). At 1–165 (MERDSHGNAS…KFTWREGQKQ (165 aa)) the chain is on the cytoplasmic side. Residues 9–13 (ASPAR) form a 1-1 repeat. Positions 9–93 (ASPARTPSAG…ASPARASPAL (85 aa)) are 13 X 5 AA repeats of A-S-P-A-[GLQR]. One copy of the 2-1; approximate repeat lies at 14-18 (TPSAG). Low complexity predominate over residues 14–52 (TPSAGASPAQASPAGTPPGRASPAQASPAQASPAGTPPG). Positions 14 to 68 (TPSAGASPAQASPAGTPPGRASPAQASPAQASPAGTPPGRASPAQASPAGTPPGR) are 4 X 5 AA repeats of T-P-P-G-R. A run of 10 repeats spans residues 19-23 (ASPAQ), 24-28 (ASPAG), 29-33 (TPPGR), 34-38 (ASPAQ), 39-43 (ASPAQ), 44-48 (ASPAG), 49-53 (TPPGR), 54-58 (ASPAQ), 59-63 (ASPAG), and 64-68 (TPPGR). The stretch at 69–78 (ASPGRASPAQ) is one 1-9; approximate repeat. Composition is skewed to low complexity over residues 69–111 (ASPG…RSAS) and 133–144 (RSSPARSAPATR). 3 consecutive repeat copies span residues 79-83 (ASPAQ), 84-88 (ASPAR), and 89-93 (ASPAL). Residues 166–186 (LPLIGCVLLLIALVVSLIILF) form a helical; Signal-anchor for type II membrane protein membrane-spanning segment. The Extracellular segment spans residues 187 to 586 (QFWQGHTGIR…GGDPGGAPRL (400 aa)). Residues 195–325 (IRYKEQRESC…HCGLRAMTGR (131 aa)) form the SRCR domain. The LDL-receptor class A domain maps to 204 to 226 (CPKHAVRCDGVVDCKLKSDELGC). 3 disulfide bridges follow: Cys-250-Cys-314, Cys-263-Cys-317, and Cys-351-Cys-367. Asn-255 and Asn-292 each carry an N-linked (GlcNAc...) asparagine glycan. The 234-residue stretch at 326 to 559 (IVGGALASDS…VLPWIYSKME (234 aa)) folds into the Peptidase S1 domain. His-366 functions as the Charge relay system in the catalytic mechanism. N-linked (GlcNAc...) asparagine glycosylation occurs at Asn-405. Residue Asp-414 is the Charge relay system of the active site. Asn-445 is a glycosylation site (N-linked (GlcNAc...) asparagine). Cystine bridges form between Cys-448–Cys-517, Cys-480–Cys-496, and Cys-507–Cys-535. Catalysis depends on Ser-511, which acts as the Charge relay system. Positions 565–574 (QDTAPSRLGT) are enriched in polar residues. The disordered stretch occupies residues 565–586 (QDTAPSRLGTSSGGDPGGAPRL). The span at 575 to 586 (SSGGDPGGAPRL) shows a compositional bias: gly residues.

The protein belongs to the peptidase S1 family. As to quaternary structure, interacts with SPINT1/HAI-1; the interaction promotes the phosphorylation and cell membrane localization of TMPRSS13. Interacts with SPINT2/HAI-2; the interaction promotes the phosphorylation and cell membrane localization of TMPRSS13. Post-translationally, the inactive zymogen is post-translationally modified and then trafficked to the cell surface, whereby it undergoes autocatalytic cleavage resulting in an activated form that is released extracellularly. Phosphorylation is required for localization at the cell surface. Phosphorylation increases following inhibition of protease activity by SPINT2/HAI-2. In terms of processing, N-glycosylation of Asn-405 and Asn-445 is required for exit from the endoplasmic reticulum and trafficking to the cell surface. Also required for autocleavage of the zymogen, activation and secretion of the mature protein. Expressed in placenta. In terms of tissue distribution, predominantly expressed in lung, placenta, pancreas, and prostate. As to expression, expressed in lung, placenta, pancreas, and prostate. Weakly expressed in testis and peripheral blood lymphocytes.

The protein localises to the cell membrane. It is found in the secreted. Its subcellular location is the cytoplasm. With respect to regulation, cleavage of HGF is inhibited by SPINT1/HAI-1 via the BPTI/Kunitz inhibitor 1 domain. Functionally, serine protease. Cleaves the proform of PRSS8/prostasin to form the active protein. Cleaves the proform of HGF to form the active protein which promotes MAPK signaling. Promotes the formation of the stratum corneum and subsequently the epidermal barrier in embryos. The chain is Transmembrane protease serine 13 (TMPRSS13) from Homo sapiens (Human).